The chain runs to 138 residues: Acidic phospholipase A2 BmooPLA2 (138 aa).

Positions 1-16 (MRTLWIVAVLLLGVEG) are cleaved as a signal peptide. Intrachain disulfides connect cysteine 42-cysteine 131, cysteine 44-cysteine 60, cysteine 59-cysteine 111, cysteine 65-cysteine 138, cysteine 66-cysteine 104, cysteine 73-cysteine 97, and cysteine 91-cysteine 102. Tyrosine 43, glycine 45, and glycine 47 together coordinate Ca(2+). The active site involves histidine 63. Aspartate 64 is a Ca(2+) binding site. The active site involves aspartate 105.

It belongs to the phospholipase A2 family. Group II subfamily. D49 sub-subfamily. The cofactor is Ca(2+). In terms of tissue distribution, expressed by the venom gland.

The protein localises to the secreted. The enzyme catalyses a 1,2-diacyl-sn-glycero-3-phosphocholine + H2O = a 1-acyl-sn-glycero-3-phosphocholine + a fatty acid + H(+). Functionally, snake venom phospholipase A2 (PLA2) that inhibits ADP- and collagen-induced platelet aggregation, has edema-inducing, anti-coagulant activity, antibacterial activity, and cytotoxic activity. In vivo, has a hypotensive effect. PLA2 catalyzes the calcium-dependent hydrolysis of the 2-acyl groups in 3-sn-phosphoglycerides. The chain is Acidic phospholipase A2 BmooPLA2 from Bothrops moojeni (Lance-headed viper).